A 475-amino-acid chain; its full sequence is Ankyrin repeat, SAM and basic leucine zipper domain-containing protein 1 (475 aa).

Positions 1 to 24 are disordered; sequence MAAAVQRGLPVAGGGESSESEDDG. Phosphoserine is present on residues Ser17, Ser18, and Ser20. ANK repeat units lie at residues 45-74, 78-107, 110-144, 148-177, 181-210, and 214-243; these read EKNE…SVES, YGWT…NASF, DKHT…DPNV, RLMT…EVNA, NGYT…NKML, and DGKT…PLEG. In terms of domain architecture, SAM spans 272–334; sequence SYAAFGDLEI…KILAALKELA (63 aa).

Interacts with DDX4, PIWIL1, RANBP9 and TDRD1.

The protein resides in the cytoplasm. Its function is as follows. Plays a central role during spermatogenesis by repressing transposable elements and preventing their mobilization, which is essential for the germline integrity. Acts via the piRNA metabolic process, which mediates the repression of transposable elements during meiosis by forming complexes composed of piRNAs and Piwi proteins and governs the methylation and subsequent repression of transposons. Its association with pi-bodies suggests a participation in the primary piRNAs metabolic process. Required prior to the pachytene stage to facilitate the production of multiple types of piRNAs, including those associated with repeats involved in the regulation of retrotransposons. May act by mediating protein-protein interactions during germ cell maturation. The protein is Ankyrin repeat, SAM and basic leucine zipper domain-containing protein 1 (ASZ1) of Loxodonta africana (African elephant).